We begin with the raw amino-acid sequence, 480 residues long: MIQGSGSDVGKSLIVAGLCRAYRNRGLKVLPFKPQNMSNNAAVTPDGGEIGRAQAMQALACGAPLSVDMNPVLLKPQTGNGAQIVVQGKVVGTAAARDYQQWKPKLLGAVLDSFSKLAAKADLIVVEGAGSASEVNLRQNDIANMGFARAAGVPVILVGDIDRGGVIAQIVGTKSVIAPEDAAMIQGFIINKFRGDPTLFADGMAFIAQRSGWPALGLIPFCAEAALLPAEDSFGLSTARPKGRGKILIAVPILPGIANFDDLDPLRLEPDVEIAMVRSGEVLPAEARLVLLPGSKTTIADLAAFRREGWDIDLAAHVRRGGHVIGLCGGYQMLGRTLRDPAGVEGPSGEAAGLGLLDVETELTGDKTLAPAVGASAADGAPFKGYEMHLGRTFGPGCAAPLLILADGRREGAVSADGRVSGSYVHGLFSELAQRASLLARLGGEGSGLSYEASIERALDAVANHLESHMDLDHLLTLAS.

The GATase cobBQ-type domain occupies 246–434 (KILIAVPILP…VHGLFSELAQ (189 aa)). Cys328 acts as the Nucleophile in catalysis. His426 is an active-site residue.

This sequence belongs to the CobB/CobQ family. CobQ subfamily.

It functions in the pathway cofactor biosynthesis; adenosylcobalamin biosynthesis. Its function is as follows. Catalyzes amidations at positions B, D, E, and G on adenosylcobyrinic A,C-diamide. NH(2) groups are provided by glutamine, and one molecule of ATP is hydrogenolyzed for each amidation. This chain is Cobyric acid synthase, found in Methylocella silvestris (strain DSM 15510 / CIP 108128 / LMG 27833 / NCIMB 13906 / BL2).